An 834-amino-acid polypeptide reads, in one-letter code: Periplasmic nitrate reductase (834 aa).

Positions 1–29 (MKLSRREFAKANAAAIAAAAAGLPLASTA) form a signal peptide, tat-type signal. The 57-residue stretch at 41 to 97 (LDWNKAPCRFCGTGCSVMVATRDNRVVATHGDVKAEVNRGLNCVKGYFLSKIMYGVD) folds into the 4Fe-4S Mo/W bis-MGD-type domain. [4Fe-4S] cluster is bound by residues cysteine 48, cysteine 51, cysteine 55, and cysteine 83. Residues lysine 85, glutamine 152, asparagine 177, cysteine 181, 214 to 221 (WGSNMAEM), 245 to 249 (STFEH), 264 to 266 (QTD), methionine 375, glutamine 379, asparagine 485, 511 to 512 (SD), lysine 534, aspartate 561, and 721 to 730 (TGRVLEHWHT) each bind Mo-bis(molybdopterin guanine dinucleotide). Position 797 (phenylalanine 797) interacts with substrate. The Mo-bis(molybdopterin guanine dinucleotide) site is built by asparagine 805 and lysine 822.

Belongs to the prokaryotic molybdopterin-containing oxidoreductase family. NasA/NapA/NarB subfamily. As to quaternary structure, component of the periplasmic nitrate reductase NapAB complex composed of NapA and NapB. [4Fe-4S] cluster is required as a cofactor. The cofactor is Mo-bis(molybdopterin guanine dinucleotide). Predicted to be exported by the Tat system. The position of the signal peptide cleavage has not been experimentally proven.

It is found in the periplasm. The catalysed reaction is 2 Fe(II)-[cytochrome] + nitrate + 2 H(+) = 2 Fe(III)-[cytochrome] + nitrite + H2O. Catalytic subunit of the periplasmic nitrate reductase complex NapAB. Receives electrons from NapB and catalyzes the reduction of nitrate to nitrite. The protein is Periplasmic nitrate reductase of Ectopseudomonas mendocina (strain ymp) (Pseudomonas mendocina).